Consider the following 218-residue polypeptide: Large ribosomal subunit protein uL3 (218 aa).

The segment at 137-157 (GVGASHGAHKNHRKPGSIGGA) is disordered.

Belongs to the universal ribosomal protein uL3 family. As to quaternary structure, part of the 50S ribosomal subunit. Forms a cluster with proteins L14 and L19.

One of the primary rRNA binding proteins, it binds directly near the 3'-end of the 23S rRNA, where it nucleates assembly of the 50S subunit. The protein is Large ribosomal subunit protein uL3 of Kocuria rhizophila (strain ATCC 9341 / DSM 348 / NBRC 103217 / DC2201).